We begin with the raw amino-acid sequence, 401 residues long: Glucose/mannose transporter GlcP (401 aa).

12 helical membrane passes run 11–31 (AFFF…PFLL), 43–63 (VIIF…PLMI), 78–98 (IMLV…IIVM), 99–119 (AFLL…FVIA), 132–152 (EVLF…FIDI), 156–176 (FLPY…WLIF), 212–232 (LGFF…FANF), 247–267 (LISV…IGFV), 278–298 (LFSC…SNPI), 306–326 (LIGL…SIII), 336–356 (LFIA…GWSL), and 360–380 (TILL…GISV).

The protein belongs to the major facilitator superfamily.

It localises to the cell membrane. Can transport glucose, mannose, 2-deoxyglucose and methyl alpha-glucoside, but not galactose. This is Glucose/mannose transporter GlcP (glcP) from Bacillus subtilis (strain 168).